The chain runs to 1071 residues: ATP-dependent helicase/deoxyribonuclease subunit B (1071 aa).

The protein belongs to the helicase family. AddB/RexB type 2 subfamily. In terms of assembly, heterodimer of AddA and RexB. Mg(2+) is required as a cofactor.

In terms of biological role, the heterodimer acts as both an ATP-dependent DNA helicase and an ATP-dependent, dual-direction single-stranded exonuclease. Recognizes the chi site generating a DNA molecule suitable for the initiation of homologous recombination. This subunit has 5' -&gt; 3' nuclease activity but not helicase activity. The polypeptide is ATP-dependent helicase/deoxyribonuclease subunit B (Streptococcus pyogenes serotype M4 (strain MGAS10750)).